A 65-amino-acid chain; its full sequence is Temporin-LK1 (65 aa).

Residues 1–22 (MFTMKKSLLLLFFLGAINLPLC) form the signal peptide. A propeptide spanning residues 23-44 (QEERNAEEERRDGDDEGSVEVQ) is cleaved from the precursor. Position 63 is a phenylalanine amide (phenylalanine 63).

Expressed by the skin glands.

Its subcellular location is the secreted. Functionally, has antimicrobial activity against Gram-positive bacteria S.aureus ATCC 2592 (MIC=2.5 uM), S.aureus ATCC 43300 (MIC=2.5 uM) and B.subtilis (MIC=15.0 uM), against Gram-negative bacteria E.coli ML-35P (MIC=30.0 uM), P.aeruginosa PA01 (MIC=2.5 uM) and P.aeruginosa ATCC 27853 (MIC=2.5 uM) and against fungus C.albicans ATCC 2002 (MIC=5.0 uM). The chain is Temporin-LK1 from Limnonectes kuhlii (Kuhl's Creek frog).